Consider the following 1632-residue polypeptide: uncharacterized protein (1632 aa).

Over residues 1 to 15 (MSNNKQTAAPAATSN) the composition is skewed to polar residues. Residues 1–23 (MSNNKQTAAPAATSNEKAENGAE) form a disordered region. The Cytoplasmic segment spans residues 1–63 (MSNNKQTAAP…TKDAFKGKYR (63 aa)). Residues 64 to 86 (VFYGNGLHTSIMFGAGTAALDLM) form a helical membrane-spanning segment. The Extracellular portion of the chain corresponds to 87-1632 (TPGSFLPPFP…ESDGEEMSGE (1546 aa)). N-linked (GlcNAc...) asparagine; by host glycans are attached at residues N149 and N274. A disordered region spans residues 516–538 (ELSSQLGDTDTKKEQKEKRSKQG). Residues N654, N719, and N797 are each glycosylated (N-linked (GlcNAc...) asparagine; by host). A disordered region spans residues 838–890 (IKGTKKSDDGDSKTDGSGDMEDDFTSLAKMTNRKRKAGGKDGPSKKKKKDGAD). 2 stretches are compositionally biased toward basic and acidic residues: residues 842–853 (KKSDDGDSKTDG) and 875–890 (GGKD…DGAD). 6 N-linked (GlcNAc...) asparagine; by host glycosylation sites follow: N1012, N1031, N1261, N1339, N1511, and N1546. Positions 1603–1632 (PSAMDVDEDEDEDMDDESDDESDGEEMSGE) are disordered. Positions 1607 to 1632 (DVDEDEDEDMDDESDDESDGEEMSGE) are enriched in acidic residues.

Its subcellular location is the host membrane. This is an uncharacterized protein from Ostreid herpesvirus 1 (isolate France) (OsHV-1).